The primary structure comprises 179 residues: Nucleoside-triphosphatase THEP1 (179 aa).

ATP-binding positions include Gly-7–Thr-14 and Leu-94–Gly-101.

Belongs to the THEP1 NTPase family.

It catalyses the reaction a ribonucleoside 5'-triphosphate + H2O = a ribonucleoside 5'-diphosphate + phosphate + H(+). In terms of biological role, has nucleotide phosphatase activity towards ATP, GTP, CTP, TTP and UTP. May hydrolyze nucleoside diphosphates with lower efficiency. The chain is Nucleoside-triphosphatase THEP1 from Thermotoga petrophila (strain ATCC BAA-488 / DSM 13995 / JCM 10881 / RKU-1).